A 143-amino-acid chain; its full sequence is Cold shock domain-containing protein CG9705 (143 aa).

Residues 1–30 (MTEPRTPEKLLAAKPPVLHHNSHSPNASLQ) form a disordered region. Phosphoserine is present on residues Ser22, Ser24, Ser28, and Ser33. Positions 54–121 (VVTGMVKSFS…KHQAVHVQIS (68 aa)) constitute a CSD domain. Phosphoserine is present on residues Ser139 and Ser140.

This chain is Cold shock domain-containing protein CG9705, found in Drosophila melanogaster (Fruit fly).